The primary structure comprises 362 residues: 3-dehydroquinate synthase (362 aa).

NAD(+) contacts are provided by residues 71 to 76 (DGEQYK), 105 to 109 (GVVGD), 129 to 130 (TT), K142, K151, and 169 to 172 (CLKT). Positions 184, 247, and 264 each coordinate Zn(2+).

It belongs to the sugar phosphate cyclases superfamily. Dehydroquinate synthase family. It depends on Co(2+) as a cofactor. Requires Zn(2+) as cofactor. The cofactor is NAD(+).

Its subcellular location is the cytoplasm. It catalyses the reaction 7-phospho-2-dehydro-3-deoxy-D-arabino-heptonate = 3-dehydroquinate + phosphate. It functions in the pathway metabolic intermediate biosynthesis; chorismate biosynthesis; chorismate from D-erythrose 4-phosphate and phosphoenolpyruvate: step 2/7. Functionally, catalyzes the conversion of 3-deoxy-D-arabino-heptulosonate 7-phosphate (DAHP) to dehydroquinate (DHQ). In Escherichia coli (strain 55989 / EAEC), this protein is 3-dehydroquinate synthase.